Here is a 503-residue protein sequence, read N- to C-terminus: EZH inhibitory protein (503 aa).

Residues 1–16 are compositionally biased toward basic and acidic residues; the sequence is MATQSDMEKEQKHQQD. 3 disordered regions span residues 1 to 72, 97 to 462, and 483 to 503; these read MATQ…AAAA, HSDR…RSIS, and VPPE…PPEP. The segment covering 41-72 has biased composition (low complexity); the sequence is PAASVTTVSSQASPSGGAALSSSTAGSSAAAA. Over residues 97–107 the composition is skewed to basic and acidic residues; the sequence is HSDRQDCRSPH. A compositionally biased stretch (polar residues) spans 184 to 197; the sequence is YPCSGASTSSQATQ. Ser-259 carries the phosphoserine modification. Positions 345 to 366 are enriched in low complexity; it reads LRSRSTQQRSALLSRRSLSGSA. The sufficient for interaction with EZH2 stretch occupies residues 401-409; it reads WHAVRMRAS. A necessary and sufficient for inhibition of PRC2/EED-EZH1 and PRC2/EED-EZH2 complex activity region spans residues 403 to 423; that stretch reads AVRMRASSPSPPGRFFLPIPQ. Residues 428–453 show a composition bias toward low complexity; the sequence is SSSSSYASNSSSPSRSPGLSPSSPSP.

Interacts with PRC2/EED-EZH1 complex member EZH1 and with PRC2/EED-EZH2 complex member EZH2; the interaction blocks EZH1/EZH2 methyltransferase activity. Interacts (via C-terminus) with SUZ12 which is a member of the PRC2/EED-EZH1 and PRC2/EED-EZH2 complexes. In testis, detected in male germ cells inside the seminiferous tubules, especially in spermatogonia and round spermatids (at protein level). In the ovary, expressed in primordial follicles and oocytes but not the external follicle cells (at protein level).

It localises to the nucleus. The protein localises to the cytoplasm. Its function is as follows. Inhibits PRC2/EED-EZH1 and PRC2/EED-EZH2 complex function by inhibiting EZH1/EZH2 methyltransferase activity, thereby causing down-regulation of histone H3 trimethylation on 'Lys-27' (H3K27me3). Probably inhibits methyltransferase activity by limiting the stimulatory effect of cofactors such as AEBP2 and JARID2. Inhibits H3K27me3 deposition during spermatogenesis and oogenesis. The polypeptide is EZH inhibitory protein (Homo sapiens (Human)).